A 337-amino-acid polypeptide reads, in one-letter code: Ketol-acid reductoisomerase (NADP(+)) (337 aa).

Positions 3-183 (VEMFYDADAD…GGARAGVIKT (181 aa)) constitute a KARI N-terminal Rossmann domain. Residues 26–29 (YGSQ), K49, S52, S54, and 84–87 (DTAQ) each bind NADP(+). Residue H109 is part of the active site. NADP(+) is bound at residue G135. A KARI C-terminal knotted domain is found at 184-329 (TFKEETETDL…KKLRDLMSWV (146 aa)). Residues D192, E196, E228, and E232 each contribute to the Mg(2+) site. S253 is a substrate binding site.

It belongs to the ketol-acid reductoisomerase family. It depends on Mg(2+) as a cofactor.

The catalysed reaction is (2R)-2,3-dihydroxy-3-methylbutanoate + NADP(+) = (2S)-2-acetolactate + NADPH + H(+). It carries out the reaction (2R,3R)-2,3-dihydroxy-3-methylpentanoate + NADP(+) = (S)-2-ethyl-2-hydroxy-3-oxobutanoate + NADPH + H(+). Its pathway is amino-acid biosynthesis; L-isoleucine biosynthesis; L-isoleucine from 2-oxobutanoate: step 2/4. It functions in the pathway amino-acid biosynthesis; L-valine biosynthesis; L-valine from pyruvate: step 2/4. Its function is as follows. Involved in the biosynthesis of branched-chain amino acids (BCAA). Catalyzes an alkyl-migration followed by a ketol-acid reduction of (S)-2-acetolactate (S2AL) to yield (R)-2,3-dihydroxy-isovalerate. In the isomerase reaction, S2AL is rearranged via a Mg-dependent methyl migration to produce 3-hydroxy-3-methyl-2-ketobutyrate (HMKB). In the reductase reaction, this 2-ketoacid undergoes a metal-dependent reduction by NADPH to yield (R)-2,3-dihydroxy-isovalerate. The polypeptide is Ketol-acid reductoisomerase (NADP(+)) (Mycolicibacterium vanbaalenii (strain DSM 7251 / JCM 13017 / BCRC 16820 / KCTC 9966 / NRRL B-24157 / PYR-1) (Mycobacterium vanbaalenii)).